Consider the following 301-residue polypeptide: Acetylglutamate kinase (301 aa).

Substrate-binding positions include 70-71 (GG), R92, and N185.

The protein belongs to the acetylglutamate kinase family. ArgB subfamily.

The protein localises to the cytoplasm. It catalyses the reaction N-acetyl-L-glutamate + ATP = N-acetyl-L-glutamyl 5-phosphate + ADP. The protein operates within amino-acid biosynthesis; L-arginine biosynthesis; N(2)-acetyl-L-ornithine from L-glutamate: step 2/4. Functionally, catalyzes the ATP-dependent phosphorylation of N-acetyl-L-glutamate. The polypeptide is Acetylglutamate kinase (Synechococcus elongatus (strain ATCC 33912 / PCC 7942 / FACHB-805) (Anacystis nidulans R2)).